The chain runs to 355 residues: UDP-N-acetylglucosamine--N-acetylmuramyl-(pentapeptide) pyrophosphoryl-undecaprenol N-acetylglucosamine transferase (355 aa).

Residues 12 to 14 (TGG), N124, R160, S192, I243, 262 to 267 (ALTVCE), and Q287 each bind UDP-N-acetyl-alpha-D-glucosamine.

Belongs to the glycosyltransferase 28 family. MurG subfamily.

It localises to the cell inner membrane. It carries out the reaction di-trans,octa-cis-undecaprenyl diphospho-N-acetyl-alpha-D-muramoyl-L-alanyl-D-glutamyl-meso-2,6-diaminopimeloyl-D-alanyl-D-alanine + UDP-N-acetyl-alpha-D-glucosamine = di-trans,octa-cis-undecaprenyl diphospho-[N-acetyl-alpha-D-glucosaminyl-(1-&gt;4)]-N-acetyl-alpha-D-muramoyl-L-alanyl-D-glutamyl-meso-2,6-diaminopimeloyl-D-alanyl-D-alanine + UDP + H(+). It functions in the pathway cell wall biogenesis; peptidoglycan biosynthesis. In terms of biological role, cell wall formation. Catalyzes the transfer of a GlcNAc subunit on undecaprenyl-pyrophosphoryl-MurNAc-pentapeptide (lipid intermediate I) to form undecaprenyl-pyrophosphoryl-MurNAc-(pentapeptide)GlcNAc (lipid intermediate II). The polypeptide is UDP-N-acetylglucosamine--N-acetylmuramyl-(pentapeptide) pyrophosphoryl-undecaprenol N-acetylglucosamine transferase (Haemophilus ducreyi (strain 35000HP / ATCC 700724)).